A 132-amino-acid polypeptide reads, in one-letter code: Small ribosomal subunit protein uS8 (132 aa).

It belongs to the universal ribosomal protein uS8 family. As to quaternary structure, part of the 30S ribosomal subunit. Contacts proteins S5 and S12.

Functionally, one of the primary rRNA binding proteins, it binds directly to 16S rRNA central domain where it helps coordinate assembly of the platform of the 30S subunit. This is Small ribosomal subunit protein uS8 from Ehrlichia chaffeensis (strain ATCC CRL-10679 / Arkansas).